The chain runs to 285 residues: tRNA pseudouridine synthase A (285 aa).

Aspartate 69 acts as the Nucleophile in catalysis. Substrate is bound at residue tyrosine 127.

This sequence belongs to the tRNA pseudouridine synthase TruA family. As to quaternary structure, homodimer.

It carries out the reaction uridine(38/39/40) in tRNA = pseudouridine(38/39/40) in tRNA. Formation of pseudouridine at positions 38, 39 and 40 in the anticodon stem and loop of transfer RNAs. In Pseudomonas aeruginosa (strain ATCC 15692 / DSM 22644 / CIP 104116 / JCM 14847 / LMG 12228 / 1C / PRS 101 / PAO1), this protein is tRNA pseudouridine synthase A.